We begin with the raw amino-acid sequence, 72 residues long: U-actitoxin-Aeq5b (72 aa).

An N-terminal signal peptide occupies residues 1–20 (MNQVMTIFLVLGVIVYSVES). 4 disulfide bridges follow: Cys-33–Cys-71, Cys-37–Cys-66, Cys-44–Cys-59, and Cys-50–Cys-56.

The protein belongs to the Acrorhagin I family. In terms of tissue distribution, expressed by acrorhagi.

It is found in the secreted. It localises to the nematocyst. Toxin that is lethal to crab. It interacts with divalent metal ions (zinc and nickel) suggesting it may function as a metal ion chelator to regulate metal ion levels or as a metal ion transporter, or that its function is modulated by metal ions. Is not active against any of the voltage-gated potassium and sodium channels tested. In addition, it does not show activity in bacterial and fungal growth inhibitory assays as well as in hemolytic assays. This is U-actitoxin-Aeq5b from Actinia equina (Beadlet anemone).